Consider the following 438-residue polypeptide: UDP-N-acetylmuramoylalanine--D-glutamate ligase (438 aa).

Gly-112–Thr-118 contributes to the ATP binding site.

The protein belongs to the MurCDEF family.

The protein resides in the cytoplasm. The enzyme catalyses UDP-N-acetyl-alpha-D-muramoyl-L-alanine + D-glutamate + ATP = UDP-N-acetyl-alpha-D-muramoyl-L-alanyl-D-glutamate + ADP + phosphate + H(+). Its pathway is cell wall biogenesis; peptidoglycan biosynthesis. Functionally, cell wall formation. Catalyzes the addition of glutamate to the nucleotide precursor UDP-N-acetylmuramoyl-L-alanine (UMA). This is UDP-N-acetylmuramoylalanine--D-glutamate ligase from Salmonella choleraesuis (strain SC-B67).